The chain runs to 238 residues: uncharacterized protein (238 aa).

Helical transmembrane passes span 6 to 26, 45 to 65, 98 to 118, 160 to 180, and 186 to 206; these read METLIRLFVSILIICVLALMI, FILLYFCGFKYLILLLSFFIL, IPILFAILAIFGFNWALIGYI, IFGTLAGVLGAFLIGLFGYLL, and IVLCGTAGGIAGNLADSLVGA.

Belongs to the TMEM19 family.

The protein resides in the cell membrane. This is an uncharacterized protein from Methanocaldococcus jannaschii (strain ATCC 43067 / DSM 2661 / JAL-1 / JCM 10045 / NBRC 100440) (Methanococcus jannaschii).